The chain runs to 677 residues: NADPH--cytochrome P450 reductase (677 aa).

Gly2 is subject to N-acetylglycine. Topologically, residues 2-21 are lumenal; it reads GDSHVDTSSTVSEAVAEEVS. The chain crosses the membrane as a helical span at residues 22 to 42; it reads LFSMTDMILFSLIVGLLTYWF. The Cytoplasmic segment spans residues 43 to 677; the sequence is LFRKKKEEVP…KGRYSLDVWS (635 aa). The residue at position 63 (Ser63) is a Phosphoserine. Positions 80–224 constitute a Flavodoxin-like domain; that stretch reads IIVFYGSQTG…DFITWREQFW (145 aa). FMN is bound by residues 86 to 91, 138 to 141, 173 to 182, and Asp208; these read SQTGTA, ATYG, and LGNKTYEHFN. The FAD-binding FR-type domain occupies 279–521; sequence KNPFLAAVTT…FVRKSQFRLP (243 aa). Arg298 provides a ligand contact to NADP(+). FAD-binding positions include Arg424, 454-457, 472-474, Tyr478, and 488-491; these read RYYS, CAV, and GVAT. NADP(+) is bound by residues Thr535, 596–597, 602–606, and Asp638; these read SR and KVYVQ. Trp676 is an FAD binding site.

The protein belongs to the NADPH--cytochrome P450 reductase family. In the N-terminal section; belongs to the flavodoxin family. It in the C-terminal section; belongs to the flavoprotein pyridine nucleotide cytochrome reductase family. It depends on FAD as a cofactor. FMN serves as cofactor.

The protein localises to the endoplasmic reticulum membrane. It carries out the reaction 2 oxidized [cytochrome P450] + NADPH = 2 reduced [cytochrome P450] + NADP(+) + H(+). In terms of biological role, this enzyme is required for electron transfer from NADP to cytochrome P450 in microsomes. It can also provide electron transfer to heme oxygenase and cytochrome B5. This is NADPH--cytochrome P450 reductase from Homo sapiens (Human).